We begin with the raw amino-acid sequence, 331 residues long: Peroxidase 69 (331 aa).

The signal sequence occupies residues 1–23; sequence MGRGYNLLFVLVTFLVLVAAVTA. Disulfide bonds link Cys-46–Cys-122, Cys-79–Cys-84, Cys-128–Cys-327, and Cys-205–Cys-237. Residue His-77 is the Proton acceptor of the active site. Ca(2+) contacts are provided by Asp-78, Val-81, Gly-83, Asp-85, and Ser-87. Asn-93 is a glycosylation site (N-linked (GlcNAc...) asparagine). Substrate is bound at residue Pro-168. His-198 is a heme b binding site. Thr-199 lines the Ca(2+) pocket. Asn-216 carries N-linked (GlcNAc...) asparagine glycosylation. Asp-248, Ser-251, and Asp-256 together coordinate Ca(2+).

The protein belongs to the peroxidase family. Classical plant (class III) peroxidase subfamily. It depends on heme b as a cofactor. The cofactor is Ca(2+). In terms of tissue distribution, mainly expressed in roots and slightly in leaves.

The protein localises to the secreted. The catalysed reaction is 2 a phenolic donor + H2O2 = 2 a phenolic radical donor + 2 H2O. Removal of H(2)O(2), oxidation of toxic reductants, biosynthesis and degradation of lignin, suberization, auxin catabolism, response to environmental stresses such as wounding, pathogen attack and oxidative stress. These functions might be dependent on each isozyme/isoform in each plant tissue. This chain is Peroxidase 69 (PER69), found in Arabidopsis thaliana (Mouse-ear cress).